Consider the following 40-residue polypeptide: AEAMAEAMADAMADAMADAMADAMAEAAADPPPGFIGVRG.

The first 3 residues, 1 to 3 (AEA), serve as a signal peptide directing secretion. A propeptide spanning residues 4–29 (MAEAMADAMADAMADAMADAMAEAAA) is cleaved from the precursor. Arg39 is modified (arginine amide).

The protein belongs to the formicidae venom precursor-01 superfamily. As to expression, expressed by the venom gland.

The protein resides in the secreted. In terms of biological role, venom protein with unknown function. Does not induce paralysis when a high dose is administered by intrathoracic injection into the blowfly Lucilia caesar. This Tetramorium bicarinatum (Tramp ant) protein is U2-myrmicitoxin-Tb1a.